The primary structure comprises 20 residues: Cruzioseptin-15 (20 aa).

Expressed by the skin glands.

It is found in the secreted. Has antimicrobial activity. The chain is Cruzioseptin-15 from Cruziohyla calcarifer (Splendid leaf frog).